The primary structure comprises 466 residues: MDIKGGRRGNVEDSLNKLSLSPPDNNSSFLSNHFQVRKSYSQAPARTLKPFASEDIKILLLENVNQSALSNLKDEGYQVEFLKTSMSEDDLVEKIKGVHAIGIRSKTRLTRRVLEAADSLIVIGCFCIGTNQVDLDFAAERGIAVFNSPYANSRSVAELVIGYIISLARQVGDRSLELHRGEWNKVSSGCWEIRGKTLGIIGYGHIGSQLSVLAEAMGLHVVYYDILPIMPLGSAKQLSSLPELLHRADFVSLHVPASPETKNMISSKEFAAMKEGSYLINASRGTVVDIPALVDASKSGKIAGAAIDVYPSEPAGNGKDKFVDSLNSWTSELTHCKNIILTPHIGGSTEEAQYNIGIEVSEALTRYINEGNSIGAVNFPEVSLRSLTEADRNAARVLFVHRNVPGVLRQVNELFIDHNIKSQFSDSRGDIAYLVADISDCTPGSLEALHQKLESLPCKINTRLLY.

The segment covering 1-15 (MDIKGGRRGNVEDSL) has biased composition (basic and acidic residues). Positions 1-26 (MDIKGGRRGNVEDSLNKLSLSPPDNN) are disordered. A compositionally biased stretch (polar residues) spans 16–26 (NKLSLSPPDNN). Phosphoserine is present on Ser-87. NAD(+) is bound by residues 205–206 (HI) and Asp-225. The residue at position 258 (Ser-258) is a Phosphoserine. NAD(+) contacts are provided by residues 282 to 284 (ASR) and Asp-308. Residue Arg-284 is part of the active site. Residue Glu-313 is part of the active site. The Proton donor role is filled by His-344. An NAD(+)-binding site is contributed by 344–347 (HIGG). The ACT domain maps to 396-466 (RVLFVHRNVP…PCKINTRLLY (71 aa)).

It belongs to the D-isomer specific 2-hydroxyacid dehydrogenase family.

It catalyses the reaction (2R)-3-phosphoglycerate + NAD(+) = 3-phosphooxypyruvate + NADH + H(+). The catalysed reaction is (R)-2-hydroxyglutarate + NAD(+) = 2-oxoglutarate + NADH + H(+). Its pathway is amino-acid biosynthesis; L-serine biosynthesis; L-serine from 3-phospho-D-glycerate: step 1/3. Its function is as follows. Catalyzes the reversible oxidation of 3-phospho-D-glycerate to 3-phosphonooxypyruvate, the first step of the phosphorylated L-serine biosynthesis pathway. Also catalyzes the reversible oxidation of 2-hydroxyglutarate to 2-oxoglutarate. This Schizosaccharomyces pombe (strain 972 / ATCC 24843) (Fission yeast) protein is Putative D-3-phosphoglycerate dehydrogenase.